Consider the following 143-residue polypeptide: MAKKVQAYIKLQVAAGKANPSPPVGPALGQHGVNIMEFCKAFNAETQDIEPGLPTPVVITVYSDRSFTFITKTPPAAVLLKKAAGIKSGSGVPNKTKVGTVTREQLEEIAKTKEPDLTASDLDAAVRTIAGSARSMGLNVEGL.

The protein belongs to the universal ribosomal protein uL11 family. In terms of assembly, part of the ribosomal stalk of the 50S ribosomal subunit. Interacts with L10 and the large rRNA to form the base of the stalk. L10 forms an elongated spine to which L12 dimers bind in a sequential fashion forming a multimeric L10(L12)X complex. Post-translationally, one or more lysine residues are methylated.

Its function is as follows. Forms part of the ribosomal stalk which helps the ribosome interact with GTP-bound translation factors. The sequence is that of Large ribosomal subunit protein uL11 from Chromohalobacter salexigens (strain ATCC BAA-138 / DSM 3043 / CIP 106854 / NCIMB 13768 / 1H11).